The chain runs to 427 residues: Gamma-glutamyl phosphate reductase (427 aa).

Belongs to the gamma-glutamyl phosphate reductase family.

Its subcellular location is the cytoplasm. The enzyme catalyses L-glutamate 5-semialdehyde + phosphate + NADP(+) = L-glutamyl 5-phosphate + NADPH + H(+). It functions in the pathway amino-acid biosynthesis; L-proline biosynthesis; L-glutamate 5-semialdehyde from L-glutamate: step 2/2. Its function is as follows. Catalyzes the NADPH-dependent reduction of L-glutamate 5-phosphate into L-glutamate 5-semialdehyde and phosphate. The product spontaneously undergoes cyclization to form 1-pyrroline-5-carboxylate. The polypeptide is Gamma-glutamyl phosphate reductase (Anaeromyxobacter dehalogenans (strain 2CP-1 / ATCC BAA-258)).